Here is a 610-residue protein sequence, read N- to C-terminus: Pentatricopeptide repeat-containing protein At5g40400 (610 aa).

12 PPR repeats span residues 165 to 199, 200 to 234, 235 to 269, 270 to 304, 305 to 339, 340 to 374, 375 to 409, 410 to 445, 446 to 480, 481 to 515, 516 to 546, and 551 to 586; these read DPVV…GFSV, SVVT…GIHP, NTYT…GFEP, DLVT…RVVP, DLVT…GIKP, DCMS…SVVP, DRFT…KVDI, PFEV…GHEA, KPET…NQVL, DAKT…EVKP, DSFI…FAME, and DPES…GFVP.

Belongs to the PPR family. P subfamily.

This is Pentatricopeptide repeat-containing protein At5g40400 from Arabidopsis thaliana (Mouse-ear cress).